Here is a 342-residue protein sequence, read N- to C-terminus: Glycerol-3-phosphate dehydrogenase [NAD(P)+] (342 aa).

Residues serine 13, tryptophan 14, and lysine 108 each coordinate NADPH. Sn-glycerol 3-phosphate is bound by residues lysine 108, glycine 139, and serine 141. Residue alanine 143 participates in NADPH binding. Lysine 194, aspartate 247, serine 257, arginine 258, and asparagine 259 together coordinate sn-glycerol 3-phosphate. The active-site Proton acceptor is lysine 194. Arginine 258 contacts NADPH. Positions 282 and 284 each coordinate NADPH.

The protein belongs to the NAD-dependent glycerol-3-phosphate dehydrogenase family.

The protein resides in the cytoplasm. It catalyses the reaction sn-glycerol 3-phosphate + NAD(+) = dihydroxyacetone phosphate + NADH + H(+). The enzyme catalyses sn-glycerol 3-phosphate + NADP(+) = dihydroxyacetone phosphate + NADPH + H(+). The protein operates within membrane lipid metabolism; glycerophospholipid metabolism. Functionally, catalyzes the reduction of the glycolytic intermediate dihydroxyacetone phosphate (DHAP) to sn-glycerol 3-phosphate (G3P), the key precursor for phospholipid synthesis. This chain is Glycerol-3-phosphate dehydrogenase [NAD(P)+], found in Lactococcus lactis subsp. cremoris (strain SK11).